A 694-amino-acid polypeptide reads, in one-letter code: Polyribonucleotide nucleotidyltransferase (694 aa).

2 residues coordinate Mg(2+): Asp485 and Asp491. One can recognise a KH domain in the interval 552–611 (PRIETMQIKPNKIATVIGPGGKQIRQIIEEAGVQIDINDSGLVSISASSPQAIEKAKSII). Residues 621–689 (GKIYEGRVTS…EKGQYKLSHK (69 aa)) enclose the S1 motif domain.

The protein belongs to the polyribonucleotide nucleotidyltransferase family. Requires Mg(2+) as cofactor.

It localises to the cytoplasm. The enzyme catalyses RNA(n+1) + phosphate = RNA(n) + a ribonucleoside 5'-diphosphate. In terms of biological role, involved in mRNA degradation. Catalyzes the phosphorolysis of single-stranded polyribonucleotides processively in the 3'- to 5'-direction. The polypeptide is Polyribonucleotide nucleotidyltransferase (Chlamydia abortus (strain DSM 27085 / S26/3) (Chlamydophila abortus)).